The chain runs to 429 residues: Endo-beta-1,4-galactanase (429 aa).

Residues 1–21 (MKSKVKMFFAAAIVWSACSST) form the signal peptide. Residue 146-149 (DPAK) participates in substrate binding. The active-site Proton donor is glutamate 194. Substrate-binding positions include 233-234 (TN) and histidine 267. Glutamate 292 acts as the Nucleophile in catalysis. Threonine 296 is a binding site for substrate. 4 residues coordinate Ca(2+): aspartate 301, aspartate 303, histidine 305, and asparagine 307. 2 residues coordinate substrate: lysine 311 and aspartate 388. Serine 396 and aspartate 399 together coordinate Ca(2+).

Belongs to the glycosyl hydrolase 53 family. It depends on Ca(2+) as a cofactor.

Its subcellular location is the secreted. The catalysed reaction is The enzyme specifically hydrolyzes (1-&gt;4)-beta-D-galactosidic linkages in type I arabinogalactans.. In terms of biological role, involved in galactan degradation. Degrades arabinose-free galactan to galactooligosaccharides, producing galactotetraose as the main product along with galactotriose, galactobiose, and galactose. Is also able to degrade galactotetraose, galactotriose and galactobiose, suggesting an additional exo-mode of activity. May hydrolyze the beta-1,4-galactan linkages of the galactan portion of arabinogalactan type I, a pectic plant polysaccharide from which most of the arabinose has been removed. The protein is Endo-beta-1,4-galactanase of Bacillus subtilis (strain 168).